The following is a 373-amino-acid chain: Probable G-protein coupled receptor 173 (373 aa).

The Extracellular portion of the chain corresponds to 1-26 (MANTTGEPEEVSGALSPPSASAYVKL). Asn-3 carries N-linked (GlcNAc...) asparagine glycosylation. A helical membrane pass occupies residues 27 to 47 (VLLGLIMCVSLAGNAILSLLV). Residues 48-59 (LKERALHKAPYY) lie on the Cytoplasmic side of the membrane. The chain crosses the membrane as a helical span at residues 60 to 80 (FLLDLCLADGIRSAVCFPFVL). At 81–97 (ASVRHGSSWTFSALSCK) the chain is on the extracellular side. A disulfide bond links Cys-96 and Cys-174. A helical membrane pass occupies residues 98-118 (IVAFMAVLFCFHAAFMLFCIS). At 119-139 (VTRYMAIAHHRFYAKRMTLWT) the chain is on the cytoplasmic side. Residues 140-160 (CAAVICMAWTLSVAMAFPPVF) traverse the membrane as a helical segment. Over 161–188 (DVGTYKFIREEDQCIFEHRYFKANDTLG) the chain is Extracellular. N-linked (GlcNAc...) asparagine glycosylation occurs at Asn-184. The chain crosses the membrane as a helical span at residues 189-209 (FMLMLAVLMAATHAVYGKLLL). At 210 to 287 (FEYRHRKMKP…VKGEKQLGRM (78 aa)) the chain is on the cytoplasmic side. A helical membrane pass occupies residues 288 to 308 (FYAITLLFLLLWSPYIVACYW). Over 309–322 (RVFVKACAVPHRYL) the chain is Extracellular. A helical transmembrane segment spans residues 323–343 (ATAVWMSFAQAAVNPIVCFLL). The Cytoplasmic segment spans residues 344 to 373 (NKDLKKCLRTHAPCWGTGGAPAPREPYCVM).

The protein belongs to the G-protein coupled receptor 1 family. Expressed in the ovary, specifically in granulosa cells of follicles that have passed the primary stage and in oocytes (at protein level). Expressed at high levels in brain. Lower levels in small intestine. In brain regions, detected in all regions tested. Highest levels in the cerebellum and cerebral cortex.

It is found in the cell membrane. Its function is as follows. Is a receptor for the SMIM20 derived peptides Phoenixin-14 and Phoenixin-20. It mediates the Phoenixin-14 and Phoenixin-20 augmentation of gonadotropin-releasing hormone (GNRH) signaling in the hypothalamus and pituitary gland. In the ovary, it mediates the effects of Phoenixin-14 and Phoenixin-20 induced granulosa cell proliferation during follicular growth. This chain is Probable G-protein coupled receptor 173 (GPR173), found in Homo sapiens (Human).